A 156-amino-acid chain; its full sequence is Transcription elongation factor GreA (156 aa).

A coiled-coil region spans residues 1-84 (MAKYTISKHR…IEDVMRSTDE (84 aa)).

The protein belongs to the GreA/GreB family.

In terms of biological role, necessary for efficient RNA polymerase transcription elongation past template-encoded arresting sites. The arresting sites in DNA have the property of trapping a certain fraction of elongating RNA polymerases that pass through, resulting in locked ternary complexes. Cleavage of the nascent transcript by cleavage factors such as GreA or GreB allows the resumption of elongation from the new 3'terminus. GreA releases sequences of 2 to 3 nucleotides. The sequence is that of Transcription elongation factor GreA from Ureaplasma urealyticum serovar 10 (strain ATCC 33699 / Western).